Consider the following 127-residue polypeptide: Small ribosomal subunit protein uS11c (127 aa).

This sequence belongs to the universal ribosomal protein uS11 family. As to quaternary structure, part of the 30S ribosomal subunit.

It is found in the plastid. Its subcellular location is the chloroplast. In Heterosigma akashiwo (strain NIES-293 / 8280G21-1), this protein is Small ribosomal subunit protein uS11c.